The following is a 273-amino-acid chain: Dermonecrotic toxin LspiSicTox-betaIE1ii (273 aa).

The active site involves H5. Mg(2+)-binding residues include E25 and D27. H41 functions as the Nucleophile in the catalytic mechanism. 2 disulfide bridges follow: C45/C51 and C47/C189. D85 is a Mg(2+) binding site.

It belongs to the arthropod phospholipase D family. Class II subfamily. It depends on Mg(2+) as a cofactor. In terms of tissue distribution, expressed by the venom gland.

It is found in the secreted. The enzyme catalyses an N-(acyl)-sphingosylphosphocholine = an N-(acyl)-sphingosyl-1,3-cyclic phosphate + choline. The catalysed reaction is an N-(acyl)-sphingosylphosphoethanolamine = an N-(acyl)-sphingosyl-1,3-cyclic phosphate + ethanolamine. It carries out the reaction a 1-acyl-sn-glycero-3-phosphocholine = a 1-acyl-sn-glycero-2,3-cyclic phosphate + choline. It catalyses the reaction a 1-acyl-sn-glycero-3-phosphoethanolamine = a 1-acyl-sn-glycero-2,3-cyclic phosphate + ethanolamine. Dermonecrotic toxins cleave the phosphodiester linkage between the phosphate and headgroup of certain phospholipids (sphingolipid and lysolipid substrates), forming an alcohol (often choline) and a cyclic phosphate. This toxin acts on sphingomyelin (SM). It may also act on ceramide phosphoethanolamine (CPE), lysophosphatidylcholine (LPC) and lysophosphatidylethanolamine (LPE), but not on lysophosphatidylserine (LPS), and lysophosphatidylglycerol (LPG). It acts by transphosphatidylation, releasing exclusively cyclic phosphate products as second products. Induces dermonecrosis, hemolysis, increased vascular permeability, edema, inflammatory response, and platelet aggregation. The polypeptide is Dermonecrotic toxin LspiSicTox-betaIE1ii (Loxosceles spinulosa (Recluse spider)).